We begin with the raw amino-acid sequence, 366 residues long: uncharacterized protein (366 aa).

This is an uncharacterized protein from Amazona oratrix (yellow-headed parrot).